Consider the following 269-residue polypeptide: Nitrite transporter NirC (269 aa).

Over 1–29 the chain is Cytoplasmic; sequence MFTDTINKCAANAARIARLSANNPLGFWV. The helical transmembrane segment at 30 to 46 threads the bilayer; the sequence is SSAMAGAYVGLGIILIF. Residues 47–58 lie on the Extracellular side of the membrane; that stretch reads TLGNLLDPSVRP. A helical transmembrane segment spans residues 59–75; sequence LVMGATFGIALTLVIIA. The Cytoplasmic segment spans residues 76–107; the sequence is GSELFTGHTMFLTLGVKAGTISHGQMWAILPQ. The helical transmembrane segment at 108–125 threads the bilayer; sequence TWLGNLVGSVFVALLYSW. The Extracellular segment spans residues 126–153; that stretch reads GGGSLLPVDTSIVHSVALAKTTAPATVL. The chain crosses the membrane as a helical span at residues 154 to 172; that stretch reads FFKGALCNWLVCLAIWMAI. The Cytoplasmic portion of the chain corresponds to 173 to 179; it reads RTEGTAK. The helical transmembrane segment at 180 to 195 threads the bilayer; that stretch reads FLAIWWCLLAFIASGY. The Extracellular segment spans residues 196 to 230; it reads EHSVANMTLFALSWFGHHSDAYTLAGIGHNLLWVT. Residues 231 to 250 traverse the membrane as a helical segment; the sequence is LGNTLSGVVFMGLGYWYATP. Residues 251–269 are Cytoplasmic-facing; sequence KSERPAPAKINQPEAAANN.

The protein belongs to the FNT transporter (TC 1.A.16) family.

The protein resides in the cell inner membrane. Functionally, catalyzes nitrite uptake and nitrite export across the cytoplasmic membrane. In Salmonella typhimurium (strain LT2 / SGSC1412 / ATCC 700720), this protein is Nitrite transporter NirC (nirC).